Consider the following 228-residue polypeptide: Ribonuclease S-4 (228 aa).

The first 27 residues, 1–27 (MGITGMTYMFTMVLSLIVLIFSASTVG), serve as a signal peptide directing secretion. Glutamine 36 serves as a coordination point for RNA. Cysteines 42 and 49 form a disulfide. Histidine 60 provides a ligand contact to RNA. The active-site Proton donor is histidine 60. An intrachain disulfide couples cysteine 75 to cysteine 119. Asparagine 87 carries N-linked (GlcNAc) asparagine glycosylation. 98–99 (NV) is a binding site for RNA. Residue asparagine 101 is glycosylated (N-linked (GlcNAc...) asparagine). RNA-binding positions include phenylalanine 108, 111-112 (RE), and 115-116 (KH). Glutamate 112 is an active-site residue. Histidine 116 serves as the catalytic Proton acceptor. Asparagine 144, asparagine 160, and asparagine 175 each carry an N-linked (GlcNAc...) asparagine glycan. 2 cysteine pairs are disulfide-bonded: cysteine 183/cysteine 222 and cysteine 199/cysteine 210.

The protein belongs to the RNase T2 family. The N-glycans attached at Asn-101, Asn-160 and Asn-175 consist predominantly of disaccharide (GlcNAc-GlcNAc). The N-glycan at 87 is 53% monosaccharide and 47% disaccharide. The N-glycan at Asn-144 contains mannose and xylose.

It is found in the secreted. The protein localises to the extracellular space. The catalysed reaction is a ribonucleotidyl-ribonucleotide-RNA + H2O = a 3'-end 3'-phospho-ribonucleotide-RNA + a 5'-end dephospho-ribonucleoside-RNA + H(+). Its function is as follows. Self-incompatibility (SI) is the inherited ability of a flowering plant to prevent self-fertilization by discriminating between self and non-self pollen during pollination. In many species, self-incompatibility is controlled by the single, multiallelic locus S. In Pyrus pyrifolia (Chinese pear), this protein is Ribonuclease S-4.